We begin with the raw amino-acid sequence, 399 residues long: Elongation factor Tu (399 aa).

Residues 10–207 (KTHMNVGTIG…AVDSYFPDPV (198 aa)) enclose the tr-type G domain. The G1 stretch occupies residues 19–26 (GHIDHGKT). 19–26 (GHIDHGKT) is a GTP binding site. Residue Thr-26 participates in Mg(2+) binding. A G2 region spans residues 60-64 (GITIN). Residues 81 to 84 (DCPG) are G3. GTP is bound by residues 81-85 (DCPGH) and 136-139 (NKVD). Residues 136–139 (NKVD) are G4. The segment at 174-176 (SAL) is G5.

The protein belongs to the TRAFAC class translation factor GTPase superfamily. Classic translation factor GTPase family. EF-Tu/EF-1A subfamily. Monomer.

It localises to the cytoplasm. The catalysed reaction is GTP + H2O = GDP + phosphate + H(+). Functionally, GTP hydrolase that promotes the GTP-dependent binding of aminoacyl-tRNA to the A-site of ribosomes during protein biosynthesis. The sequence is that of Elongation factor Tu from Petrotoga mobilis (strain DSM 10674 / SJ95).